The primary structure comprises 781 residues: MLYIYYLFKSLFFHTLFVFSIYKDCPYMRASSPETTSAVKCPFNKTAVEGTHNKDWWPNQLRVDLLHQHSNKSNPLGETFDYAKEFQKLDYAALKRDLHALMTDSQDWWPADFGHYGGLFIRMAWHSAGTYRIGDGRGGAGRGQQRFAPLNSWPDNVSLDKARRLLWPIKKKYGQQISWADLIVLSGNVALESMGFKTFGFAGGRVDTWEPDQDVYWGRETTWLGGDVRYGAVSEGVHHPDEHRGAKEKAAKNSDSRVLENPLAAVQMGLIYVNPEGPDGRPDPLASARDIRETFARMAMNDEETVALIAGGHTFGKTHGAAPADNVGPEPEAGELEQQGLGWHNRFGSGKAGDTITSGLEVTWTKTPTQWSNDFFEHLFGYEWELTKSPAGAYQWVAKNAAATIPHAHDPSKKLLPMMLTSDLALRFDPIYEKISRHFHAHPDQFADVFARAWFKLMHRDMGPRVRYLGPEVPVEELIWQDPVPKVSHVLVDAQDLLALKQKISASGLGISQLVSTAWASASTFRGSDKRGGANGGRLCLAPQSQWEVNQPQQLSVVLETLRRVQTEFNAQAGDKRISLADLIVLAGGVGVEQAAKRAGIVVEVPFVPGRTDALQEQTDVSSFAPLEPFADGFRNYVKGDEVVPSEHLLIDRAQLLTLTAPEMTVLIGGLRVLGANVGGVKHGVFTDRLGTLSNDFFINLLDMGTEWAPVSKERHVFEGRDRRTGVLKWTGTRVDLVFGSNALLRALAEFYAAVDAQEKFVRDFVAAWSKVMHLDRFDLV.

Residues 1–20 (MLYIYYLFKSLFFHTLFVFS) form the signal peptide. Positions 125–272 (WHSAGTYRIG…LAAVQMGLIY (148 aa)) form a cross-link, tryptophyl-tyrosyl-methioninium (Trp-Tyr) (with M-298). The active-site Proton acceptor is His-126. A disordered region spans residues 237 to 256 (VHHPDEHRGAKEKAAKNSDS). Residues 272 to 298 (YVNPEGPDGRPDPLASARDIRETFARM) constitute a cross-link (tryptophyl-tyrosyl-methioninium (Tyr-Met) (with W-125)). Residue His-313 participates in heme b binding. The interval 317 to 336 (KTHGAAPADNVGPEPEAGEL) is disordered.

Belongs to the peroxidase family. Peroxidase/catalase subfamily. Homodimer or homotetramer. Heme b is required as a cofactor. Post-translationally, formation of the three residue Trp-Tyr-Met cross-link is important for the catalase, but not the peroxidase activity of the enzyme.

It catalyses the reaction H2O2 + AH2 = A + 2 H2O. The catalysed reaction is 2 H2O2 = O2 + 2 H2O. Bifunctional enzyme with both catalase and broad-spectrum peroxidase activity. The protein is Catalase-peroxidase of Xylella fastidiosa (strain 9a5c).